The following is a 388-amino-acid chain: Succinate--CoA ligase [ADP-forming] subunit beta (388 aa).

An ATP-grasp domain is found at 9–244 (KQLFARYGLP…PSQEDSREAH (236 aa)). Residues K46, 53–55 (GRG), E99, T102, and E107 contribute to the ATP site. Mg(2+)-binding residues include N199 and D213. Substrate is bound by residues N264 and 321–323 (GIV).

The protein belongs to the succinate/malate CoA ligase beta subunit family. As to quaternary structure, heterotetramer of two alpha and two beta subunits. Requires Mg(2+) as cofactor.

It carries out the reaction succinate + ATP + CoA = succinyl-CoA + ADP + phosphate. It catalyses the reaction GTP + succinate + CoA = succinyl-CoA + GDP + phosphate. It functions in the pathway carbohydrate metabolism; tricarboxylic acid cycle; succinate from succinyl-CoA (ligase route): step 1/1. Its function is as follows. Succinyl-CoA synthetase functions in the citric acid cycle (TCA), coupling the hydrolysis of succinyl-CoA to the synthesis of either ATP or GTP and thus represents the only step of substrate-level phosphorylation in the TCA. The beta subunit provides nucleotide specificity of the enzyme and binds the substrate succinate, while the binding sites for coenzyme A and phosphate are found in the alpha subunit. This Erwinia tasmaniensis (strain DSM 17950 / CFBP 7177 / CIP 109463 / NCPPB 4357 / Et1/99) protein is Succinate--CoA ligase [ADP-forming] subunit beta.